Consider the following 444-residue polypeptide: MAGEGDPEDAAHNMGNHLPLLPAEEEEEDEIEMEVEDQDNKEPKKPNIINFDTSLPTSHTYLGSDMEEFHGRTLHDDDSCPVIPVLPQVVMTLIPGQTLPLQLFSPQEVSMVRNLIQKDRTFAVLAYSNVQEREAQFGTTAEIYAYREEQDFGIEVVKVKAIGRQRFKVLEIRTQSDGIQQAKVQILPECVLPSTMSAVQLESLNKCRIFPSKPVSWEDQCSYKWWQKYQKRKFHCANLTSWPRWLYSLYDAETLMDRIKKQLREWDENLKEDSLPSNPIDFSYRVAACLPIDDVLRIQLLKIGSAIQRLRCELDIMNKCTSLCCKQCQETEITTKNEIFSLSLCGPMAAYVNPHGYVHETLTVYKASNLNLIGRPSTDHSWFPGYAWTIAQCRICASHIGWKFTATKKDMSPQKFWGLTRSALLPTIPDTEDDISPDKVILCL.

The interval 1–52 is disordered; the sequence is MAGEGDPEDAAHNMGNHLPLLPAEEEEEDEIEMEVEDQDNKEPKKPNIINFD. A compositionally biased stretch (acidic residues) spans 23–37; that stretch reads AEEEEEDEIEMEVED. The Lon N-terminal domain maps to 80–321; the sequence is CPVIPVLPQV…CELDIMNKCT (242 aa). The CULT domain occupies 320–428; sequence CTSLCCKQCQ…LTRSALLPTI (109 aa). Residues Cys325 and Cys328 each coordinate Zn(2+). Residues His380, Trp382, and Trp388 each coordinate (S)-thalidomide. Cys393 and Cys396 together coordinate Zn(2+).

It belongs to the CRBN family. As to quaternary structure, component of a DCX (DDB1-CUL4-X-box) protein ligase complex, at least composed of CRBN, CUL4A, DDB1 and RBX1. Interacts directly with DDB1. Interacts with KCNT1. Interacts with ILF2. Interacts with TRAF6 and ECSIT. Post-translationally, ubiquitinated, ubiquitination is mediated by its own DCX protein ligase complex.

Its subcellular location is the cytoplasm. The protein resides in the nucleus. The protein localises to the membrane. The protein operates within protein modification; protein ubiquitination. Functionally, substrate recognition component of a DCX (DDB1-CUL4-X-box) E3 protein ligase complex that mediates the ubiquitination and subsequent proteasomal degradation of target proteins, such as MEIS2, ILF2 or GLUL. Normal degradation of key regulatory proteins is required for normal limb outgrowth and expression of the fibroblast growth factor FGF8. Maintains presynaptic glutamate release and consequently cognitive functions, such as memory and learning, by negatively regulating large-conductance calcium-activated potassium (BK) channels in excitatory neurons. Likely to function by regulating the assembly and neuronal surface expression of BK channels via its interaction with KCNT1. May also be involved in regulating anxiety-like behaviors via a BK channel-independent mechanism. Plays a negative role in TLR4 signaling by interacting with TRAF6 and ECSIT, leading to inhibition of ECSIT ubiquitination, an important step of the signaling. The protein is Protein cereblon (CRBN) of Bos taurus (Bovine).